The primary structure comprises 594 residues: DNA ligase (594 aa).

NAD(+)-binding positions include 32-36 (DEEYD), 81-82 (SL), and Glu118. Lys120 (N6-AMP-lysine intermediate) is an active-site residue. NAD(+)-binding residues include Arg141, Glu181, Lys299, and Lys323. Positions 417, 420, 436, and 442 each coordinate Zn(2+).

The protein belongs to the NAD-dependent DNA ligase family. LigA subfamily. Mg(2+) serves as cofactor. Mn(2+) is required as a cofactor.

It catalyses the reaction NAD(+) + (deoxyribonucleotide)n-3'-hydroxyl + 5'-phospho-(deoxyribonucleotide)m = (deoxyribonucleotide)n+m + AMP + beta-nicotinamide D-nucleotide.. In terms of biological role, DNA ligase that catalyzes the formation of phosphodiester linkages between 5'-phosphoryl and 3'-hydroxyl groups in double-stranded DNA using NAD as a coenzyme and as the energy source for the reaction. It is essential for DNA replication and repair of damaged DNA. The sequence is that of DNA ligase from Blochmanniella floridana.